A 427-amino-acid polypeptide reads, in one-letter code: Enolase (427 aa).

Glutamine 162 lines the (2R)-2-phosphoglycerate pocket. Glutamate 204 (proton donor) is an active-site residue. Mg(2+) contacts are provided by aspartate 241, glutamate 284, and aspartate 311. (2R)-2-phosphoglycerate is bound by residues lysine 336, arginine 365, serine 366, and lysine 387. Catalysis depends on lysine 336, which acts as the Proton acceptor.

Belongs to the enolase family. The cofactor is Mg(2+).

Its subcellular location is the cytoplasm. It is found in the secreted. The protein localises to the cell surface. It catalyses the reaction (2R)-2-phosphoglycerate = phosphoenolpyruvate + H2O. Its pathway is carbohydrate degradation; glycolysis; pyruvate from D-glyceraldehyde 3-phosphate: step 4/5. In terms of biological role, catalyzes the reversible conversion of 2-phosphoglycerate (2-PG) into phosphoenolpyruvate (PEP). It is essential for the degradation of carbohydrates via glycolysis. The protein is Enolase of Corynebacterium kroppenstedtii (strain DSM 44385 / JCM 11950 / CIP 105744 / CCUG 35717).